Reading from the N-terminus, the 263-residue chain is Phosphonates import ATP-binding protein PhnC 1 (263 aa).

The 246-residue stretch at Ile3–Lys248 folds into the ABC transporter domain. ATP is bound at residue Gly37–Ser44.

The protein belongs to the ABC transporter superfamily. Phosphonates importer (TC 3.A.1.9.1) family. As to quaternary structure, the complex is composed of two ATP-binding proteins (PhnC), two transmembrane proteins (PhnE) and a solute-binding protein (PhnD).

It is found in the cell inner membrane. The catalysed reaction is phosphonate(out) + ATP + H2O = phosphonate(in) + ADP + phosphate + H(+). Its function is as follows. Part of the ABC transporter complex PhnCDE involved in phosphonates import. Responsible for energy coupling to the transport system. The sequence is that of Phosphonates import ATP-binding protein PhnC 1 from Synechococcus sp. (strain JA-2-3B'a(2-13)) (Cyanobacteria bacterium Yellowstone B-Prime).